We begin with the raw amino-acid sequence, 107 residues long: uncharacterized protein (107 aa).

This is an uncharacterized protein from Microplitis demolitor (Parasitoid wasp).